The chain runs to 404 residues: MDQSGMEIPVTLIIKAPNQKYSDQTISCFLNWTVGKLKTHLSNVYPSKPLTKDQRLVYSGRLLPDHLQLKDILRKQDEYHMVHLVCASRSPPSSPKSSTDRGSHEALASSTSSNSDHSDSTTPSPSQESLSLVTGSSEGLRQRTLSQAQTDPAQSHQFPYVIQGNVDHQFPGQGVPPAFPVYPALSPLQMLWWQQMYAHQYYMQYQAAVSAQATSSAGSAQRAASSPLNLAHVPGEEPPPAPNLVAQENGPMNENVQMNAQGGPVLNEEDLNRDWLDWVYTFSRAAVLLSIVYFYSSFSRFIMVMGAMLLVYLHQAGWFPFRQEGGQQQAPNNVDANNDGHNANNLELEEMERLMDDGLEDESGEDAGEDASAAQRPGLMASAWSFITTFFTSLIPEGPPQVAN.

The Ubiquitin-like domain occupies 10–89 (VTLIIKAPNQ…HMVHLVCASR (80 aa)). Positions 86–153 (CASRSPPSSP…TLSQAQTDPA (68 aa)) are disordered. Low complexity-rich tracts occupy residues 88-97 (SRSPPSSPKS) and 109-126 (SSTSSNSDHSDSTTPSPS). Residues 127–153 (QESLSLVTGSSEGLRQRTLSQAQTDPA) are compositionally biased toward polar residues. The chain crosses the membrane as a helical span at residues 301 to 321 (FIMVMGAMLLVYLHQAGWFPF).

The protein localises to the membrane. Its function is as follows. Could be involved in the unfolded protein response (UPR) pathway. This chain is Homocysteine-responsive endoplasmic reticulum-resident ubiquitin-like domain member 2 protein (Herpud2), found in Mus musculus (Mouse).